The following is a 634-amino-acid chain: 1-deoxy-D-xylulose-5-phosphate synthase (634 aa).

Thiamine diphosphate contacts are provided by residues H74 and 115-117 (AHS). D146 contacts Mg(2+). Residues 147–148 (GA), N176, Y283, and E365 each bind thiamine diphosphate. Position 176 (N176) interacts with Mg(2+).

This sequence belongs to the transketolase family. DXPS subfamily. Homodimer. Mg(2+) serves as cofactor. Thiamine diphosphate is required as a cofactor.

It catalyses the reaction D-glyceraldehyde 3-phosphate + pyruvate + H(+) = 1-deoxy-D-xylulose 5-phosphate + CO2. The protein operates within metabolic intermediate biosynthesis; 1-deoxy-D-xylulose 5-phosphate biosynthesis; 1-deoxy-D-xylulose 5-phosphate from D-glyceraldehyde 3-phosphate and pyruvate: step 1/1. Its function is as follows. Catalyzes the acyloin condensation reaction between C atoms 2 and 3 of pyruvate and glyceraldehyde 3-phosphate to yield 1-deoxy-D-xylulose-5-phosphate (DXP). This is 1-deoxy-D-xylulose-5-phosphate synthase from Burkholderia cenocepacia (strain ATCC BAA-245 / DSM 16553 / LMG 16656 / NCTC 13227 / J2315 / CF5610) (Burkholderia cepacia (strain J2315)).